The following is a 638-amino-acid chain: Methylmalonyl-CoA mutase small subunit (638 aa).

A compositionally biased stretch (polar residues) spans 1–11 (MSSTDQGTNPA). The tract at residues 1-34 (MSSTDQGTNPADTDDLTPTTLSLAGDFPKATEEQ) is disordered.

Belongs to the methylmalonyl-CoA mutase family. As to quaternary structure, heterodimer of an alpha and a beta chain. Adenosylcob(III)alamin is required as a cofactor.

The catalysed reaction is (R)-methylmalonyl-CoA = succinyl-CoA. It participates in metabolic intermediate metabolism; propanoyl-CoA degradation; succinyl-CoA from propanoyl-CoA: step 3/3. Functionally, catalyzes the isomerization of succinyl-CoA to methylmalonyl-CoA during synthesis of propionate from tricarboxylic acid-cycle intermediates. In Propionibacterium freudenreichii subsp. shermanii, this protein is Methylmalonyl-CoA mutase small subunit (mutA).